We begin with the raw amino-acid sequence, 224 residues long: Phosphoribosyltransferase domain-containing protein 1 (224 aa).

Glutamate 140 and aspartate 141 together coordinate Mg(2+). Residues 140–148 (EDIINTGRT), lysine 172, 193–194 (FV), and aspartate 200 contribute to the GMP site. Aspartate 200 serves as a coordination point for Mg(2+).

The protein belongs to the purine/pyrimidine phosphoribosyltransferase family.

This chain is Phosphoribosyltransferase domain-containing protein 1 (prtfdc1), found in Xenopus tropicalis (Western clawed frog).